The primary structure comprises 249 residues: Probable transcriptional regulatory protein LBJ_0543 (249 aa).

This sequence belongs to the TACO1 family.

It is found in the cytoplasm. This Leptospira borgpetersenii serovar Hardjo-bovis (strain JB197) protein is Probable transcriptional regulatory protein LBJ_0543.